Reading from the N-terminus, the 362-residue chain is Peptide chain release factor 1 (362 aa).

Q237 is modified (N5-methylglutamine).

It belongs to the prokaryotic/mitochondrial release factor family. Methylated by PrmC. Methylation increases the termination efficiency of RF1.

It localises to the cytoplasm. Peptide chain release factor 1 directs the termination of translation in response to the peptide chain termination codons UAG and UAA. In Aeromonas salmonicida (strain A449), this protein is Peptide chain release factor 1.